The chain runs to 130 residues: Histone H2A type 1-E (130 aa).

The tract at residues 1–22 (MSGRGKQGGKARAKAKTRSSRA) is disordered. S2 is subject to N-acetylserine. Phosphoserine; by RPS6KA5 is present on S2. R4 carries the post-translational modification Citrulline; alternate. Symmetric dimethylarginine; by PRMT5; alternate is present on R4. N6-(2-hydroxyisobutyryl)lysine; alternate is present on residues K6 and K10. K6 is modified (N6-acetyllysine; alternate). Residues 7–19 (QGGKARAKAKTRS) show a composition bias toward basic residues. Residue K10 is modified to N6-lactoyllysine; alternate. An N6-succinyllysine; alternate modification is found at K10. Glycyl lysine isopeptide (Lys-Gly) (interchain with G-Cter in ubiquitin) cross-links involve residues K14 and K16. K37 is modified (N6-(2-hydroxyisobutyryl)lysine; alternate). K37 carries the N6-(beta-hydroxybutyryl)lysine; alternate modification. K37 is subject to N6-crotonyllysine; alternate. An N6-(2-hydroxyisobutyryl)lysine mark is found at K75 and K76. K96 is modified (N6-(2-hydroxyisobutyryl)lysine; alternate). Position 96 is an N6-succinyllysine; alternate (K96). K96 carries the post-translational modification N6-glutaryllysine; alternate. An N5-methylglutamine modification is found at Q105. Residue K119 is modified to N6-(2-hydroxyisobutyryl)lysine; alternate. N6-crotonyllysine; alternate is present on residues K119 and K120. Residues K119 and K120 each carry the N6-glutaryllysine; alternate modification. K120 is covalently cross-linked (Glycyl lysine isopeptide (Lys-Gly) (interchain with G-Cter in ubiquitin); alternate). T121 is modified (phosphothreonine; by DCAF1). Position 126 is an N6-crotonyllysine; alternate (K126). K126 bears the N6-glutaryllysine; alternate mark.

The protein belongs to the histone H2A family. In terms of assembly, the nucleosome is a histone octamer containing two molecules each of H2A, H2B, H3 and H4 assembled in one H3-H4 heterotetramer and two H2A-H2B heterodimers. The octamer wraps approximately 147 bp of DNA. Deiminated on Arg-4 in granulocytes upon calcium entry. Post-translationally, monoubiquitination of Lys-120 (H2AK119Ub) by RING1, TRIM37 and RNF2/RING2 complex gives a specific tag for epigenetic transcriptional repression and participates in X chromosome inactivation of female mammals. It is involved in the initiation of both imprinted and random X inactivation. Ubiquitinated H2A is enriched in inactive X chromosome chromatin. Ubiquitination of H2A functions downstream of methylation of 'Lys-27' of histone H3 (H3K27me). H2AK119Ub by RNF2/RING2 can also be induced by ultraviolet and may be involved in DNA repair. Following DNA double-strand breaks (DSBs), it is ubiquitinated through 'Lys-63' linkage of ubiquitin moieties by the E2 ligase UBE2N and the E3 ligases RNF8 and RNF168, leading to the recruitment of repair proteins to sites of DNA damage. Ubiquitination at Lys-14 and Lys-16 (H2AK13Ub and H2AK15Ub, respectively) in response to DNA damage is initiated by RNF168 that mediates monoubiquitination at these 2 sites, and 'Lys-63'-linked ubiquitin are then conjugated to monoubiquitin; RNF8 is able to extend 'Lys-63'-linked ubiquitin chains in vitro. H2AK119Ub and ionizing radiation-induced 'Lys-63'-linked ubiquitination (H2AK13Ub and H2AK15Ub) are distinct events. In terms of processing, phosphorylation on Ser-2 (H2AS1ph) is enhanced during mitosis. Phosphorylation on Ser-2 by RPS6KA5/MSK1 directly represses transcription. Acetylation of H3 inhibits Ser-2 phosphorylation by RPS6KA5/MSK1. Phosphorylation at Thr-121 (H2AT120ph) by DCAF1 is present in the regulatory region of many tumor suppresor genes and down-regulates their transcription. Symmetric dimethylation on Arg-4 by the PRDM1/PRMT5 complex may play a crucial role in the germ-cell lineage. Post-translationally, glutamine methylation at Gln-105 (H2AQ104me) by FBL is specifically dedicated to polymerase I. It is present at 35S ribosomal DNA locus and impairs binding of the FACT complex. In terms of processing, crotonylation (Kcr) is specifically present in male germ cells and marks testis-specific genes in post-meiotic cells, including X-linked genes that escape sex chromosome inactivation in haploid cells. Crotonylation marks active promoters and enhancers and confers resistance to transcriptional repressors. It is also associated with post-meiotically activated genes on autosomes. Lactylated in macrophages by EP300/P300 by using lactoyl-CoA directly derived from endogenous or exogenous lactate, leading to stimulates gene transcription.

The protein resides in the nucleus. It is found in the chromosome. In terms of biological role, core component of nucleosome. Nucleosomes wrap and compact DNA into chromatin, limiting DNA accessibility to the cellular machineries which require DNA as a template. Histones thereby play a central role in transcription regulation, DNA repair, DNA replication and chromosomal stability. DNA accessibility is regulated via a complex set of post-translational modifications of histones, also called histone code, and nucleosome remodeling. This Rattus norvegicus (Rat) protein is Histone H2A type 1-E.